The following is a 305-amino-acid chain: Nucleotide-binding protein Mjls_2437 (305 aa).

ATP is bound at residue 28-35 (GLSGAGRG). 79–82 (DVRS) contacts GTP.

It belongs to the RapZ-like family.

Functionally, displays ATPase and GTPase activities. The protein is Nucleotide-binding protein Mjls_2437 of Mycobacterium sp. (strain JLS).